A 309-amino-acid polypeptide reads, in one-letter code: Probable nitrogen assimilation transcriptional activator (309 aa).

One can recognise an HTH lysR-type domain in the interval 1-57 (MRLEQLQAFLKVAELGSFQQAALQSEVTQSTISRQIQGLESALKCQLFHRGAQAKLT). A DNA-binding region (H-T-H motif) is located at residues 18–38 (FQQAALQSEVTQSTISRQIQG).

It belongs to the LysR transcriptional regulatory family.

In terms of biological role, seems to regulate utilization of fixed nitrogen by controlling the expression of a certain gene(s) involved in nitrogen metabolism. The protein is Probable nitrogen assimilation transcriptional activator (ntcB) of Synechocystis sp. (strain ATCC 27184 / PCC 6803 / Kazusa).